Here is a 376-residue protein sequence, read N- to C-terminus: Alanine racemase (376 aa).

Lys-36 (proton acceptor; specific for D-alanine) is an active-site residue. Lys-36 bears the N6-(pyridoxal phosphate)lysine mark. Position 134 (Arg-134) interacts with substrate. Catalysis depends on Tyr-266, which acts as the Proton acceptor; specific for L-alanine. Met-314 contacts substrate.

This sequence belongs to the alanine racemase family. The cofactor is pyridoxal 5'-phosphate.

The enzyme catalyses L-alanine = D-alanine. It functions in the pathway amino-acid biosynthesis; D-alanine biosynthesis; D-alanine from L-alanine: step 1/1. Its function is as follows. Catalyzes the interconversion of L-alanine and D-alanine. May also act on other amino acids. The protein is Alanine racemase (alr) of Nitratidesulfovibrio vulgaris (strain DP4) (Desulfovibrio vulgaris).